A 313-amino-acid polypeptide reads, in one-letter code: Malate dehydrogenase (313 aa).

NAD(+)-binding positions include 8–13 (GAGNVG) and Asp33. Substrate-binding residues include Arg83 and Arg89. NAD(+) is bound by residues Asn96 and 119–121 (ISN). Residues Asn121 and Arg152 each coordinate substrate. His176 acts as the Proton acceptor in catalysis.

This sequence belongs to the LDH/MDH superfamily. MDH type 3 family.

The catalysed reaction is (S)-malate + NAD(+) = oxaloacetate + NADH + H(+). Catalyzes the reversible oxidation of malate to oxaloacetate. The chain is Malate dehydrogenase from Bacteroides fragilis (strain ATCC 25285 / DSM 2151 / CCUG 4856 / JCM 11019 / LMG 10263 / NCTC 9343 / Onslow / VPI 2553 / EN-2).